Reading from the N-terminus, the 244-residue chain is CTD nuclear envelope phosphatase 1 (244 aa).

The helical transmembrane segment at 7–29 threads the bilayer; the sequence is LLGLRTFVAFAAKLWSFFIYLLR. The FCP1 homology domain occupies 57–224; that stretch reads AQVKRKILVL…LNLLPMLDAL (168 aa).

Belongs to the dullard family. (Microbial infection) Interacts with Chandipura virus matrix protein. In terms of assembly, interacts with CNEP1R1; the complex dephosphorylates LPIN1 and LPIN2. In terms of tissue distribution, muscle specific with lower expression in other metabolic tissues.

The protein resides in the endoplasmic reticulum membrane. It localises to the nucleus membrane. It catalyses the reaction O-phospho-L-seryl-[protein] + H2O = L-seryl-[protein] + phosphate. It carries out the reaction O-phospho-L-threonyl-[protein] + H2O = L-threonyl-[protein] + phosphate. Functionally, serine/threonine protein phosphatase forming with CNEP1R1 an active phosphatase complex that dephosphorylates and may activate LPIN1 and LPIN2. LPIN1 and LPIN2 are phosphatidate phosphatases that catalyze the conversion of phosphatidic acid to diacylglycerol and control the metabolism of fatty acids at different levels. May indirectly modulate the lipid composition of nuclear and/or endoplasmic reticulum membranes and be required for proper nuclear membrane morphology and/or dynamics. May also indirectly regulate the production of lipid droplets and triacylglycerol. May antagonize BMP signaling. The protein is CTD nuclear envelope phosphatase 1 (CTDNEP1) of Homo sapiens (Human).